Here is a 212-residue protein sequence, read N- to C-terminus: Thiamine-phosphate synthase (212 aa).

38 to 42 contributes to the 4-amino-2-methyl-5-(diphosphooxymethyl)pyrimidine binding site; the sequence is QLREK. 2 residues coordinate Mg(2+): D71 and D90. K138 contacts 4-amino-2-methyl-5-(diphosphooxymethyl)pyrimidine. A 2-[(2R,5Z)-2-carboxy-4-methylthiazol-5(2H)-ylidene]ethyl phosphate-binding site is contributed by G166.

This sequence belongs to the thiamine-phosphate synthase family. It depends on Mg(2+) as a cofactor.

It carries out the reaction 2-[(2R,5Z)-2-carboxy-4-methylthiazol-5(2H)-ylidene]ethyl phosphate + 4-amino-2-methyl-5-(diphosphooxymethyl)pyrimidine + 2 H(+) = thiamine phosphate + CO2 + diphosphate. The enzyme catalyses 2-(2-carboxy-4-methylthiazol-5-yl)ethyl phosphate + 4-amino-2-methyl-5-(diphosphooxymethyl)pyrimidine + 2 H(+) = thiamine phosphate + CO2 + diphosphate. The catalysed reaction is 4-methyl-5-(2-phosphooxyethyl)-thiazole + 4-amino-2-methyl-5-(diphosphooxymethyl)pyrimidine + H(+) = thiamine phosphate + diphosphate. It functions in the pathway cofactor biosynthesis; thiamine diphosphate biosynthesis; thiamine phosphate from 4-amino-2-methyl-5-diphosphomethylpyrimidine and 4-methyl-5-(2-phosphoethyl)-thiazole: step 1/1. Condenses 4-methyl-5-(beta-hydroxyethyl)thiazole monophosphate (THZ-P) and 2-methyl-4-amino-5-hydroxymethyl pyrimidine pyrophosphate (HMP-PP) to form thiamine monophosphate (TMP). This chain is Thiamine-phosphate synthase, found in Chlamydia caviae (strain ATCC VR-813 / DSM 19441 / 03DC25 / GPIC) (Chlamydophila caviae).